The following is a 177-amino-acid chain: UPF0251 protein Cag_0886 (177 aa).

The interval 147 to 177 is disordered; that stretch reads GGCLSDEESDEQENEQRTVGYPESEEELEIE.

The protein belongs to the UPF0251 family.

The polypeptide is UPF0251 protein Cag_0886 (Chlorobium chlorochromatii (strain CaD3)).